A 134-amino-acid chain; its full sequence is Histone H2A (134 aa).

Gly residues predominate over residues 1–11 (MTGGGKSGGKA). The tract at residues 1-25 (MTGGGKSGGKASGSKNAQSRSSKAG) is disordered. An N6-acetyllysine mark is found at lysine 6 and lysine 10. Glutamine 107 carries the N5-methylglutamine modification. Serine 131 is modified (phosphoserine). Residues 131–132 (SQ) carry the [ST]-Q motif motif.

Belongs to the histone H2A family. The nucleosome is a histone octamer containing two molecules each of H2A, H2B, H3 and H4 assembled in one H3-H4 heterotetramer and two H2A-H2B heterodimers. The octamer wraps approximately 147 bp of DNA. In terms of processing, phosphorylated to form H2AS128ph (gamma-H2A) in response to DNA double-strand breaks (DSBs) generated by exogenous genotoxic agents and by stalled replication forks. Phosphorylation is dependent on the DNA damage checkpoint kinases mec-1/ATR and tel-1/ATM, spreads on either side of a detected DSB site and may mark the surrounding chromatin for recruitment of proteins required for DNA damage signaling and repair. Gamma-H2A is removed from the DNA prior to the strand invasion-primer extension step of the repair process and subsequently dephosphorylated. Dephosphorylation is necessary for efficient recovery from the DNA damage checkpoint. Acetylated by esa-1 to form H2AK4ac and H2AK7ac.

Its subcellular location is the nucleus. The protein resides in the chromosome. Core component of nucleosome which plays a central role in DNA double strand break (DSB) repair. Nucleosomes wrap and compact DNA into chromatin, limiting DNA accessibility to the cellular machineries which require DNA as a template. Histones thereby play a central role in transcription regulation, DNA repair, DNA replication and chromosomal stability. DNA accessibility is regulated via a complex set of post-translational modifications of histones, also called histone code, and nucleosome remodeling. This Neurospora crassa (strain ATCC 24698 / 74-OR23-1A / CBS 708.71 / DSM 1257 / FGSC 987) protein is Histone H2A (hh2a).